The primary structure comprises 398 residues: Elongation factor Tu (398 aa).

A tr-type G domain is found at 10-207 (KPHVNIGTIG…TVDEYIPEPE (198 aa)). A G1 region spans residues 19-26 (GHVDHGKT). A GTP-binding site is contributed by 19 to 26 (GHVDHGKT). Threonine 26 serves as a coordination point for Mg(2+). The segment at 63–67 (GITIN) is G2. The segment at 84–87 (DAPG) is G3. GTP is bound by residues 84–88 (DAPGH) and 139–142 (NKVD). A G4 region spans residues 139–142 (NKVD). The tract at residues 177–179 (SAL) is G5.

This sequence belongs to the TRAFAC class translation factor GTPase superfamily. Classic translation factor GTPase family. EF-Tu/EF-1A subfamily. Monomer.

Its subcellular location is the cytoplasm. The catalysed reaction is GTP + H2O = GDP + phosphate + H(+). Its function is as follows. GTP hydrolase that promotes the GTP-dependent binding of aminoacyl-tRNA to the A-site of ribosomes during protein biosynthesis. In Streptococcus suis (strain 98HAH33), this protein is Elongation factor Tu.